Reading from the N-terminus, the 260-residue chain is NH(3)-dependent NAD(+) synthetase (260 aa).

Residue 31–38 (GLSGGLDS) participates in ATP binding. Mg(2+) is bound at residue Asp37. Deamido-NAD(+) is bound at residue Arg112. Residue Thr132 coordinates ATP. Residue Glu137 participates in Mg(2+) binding. Lys161 and Ser183 together coordinate ATP.

It belongs to the NAD synthetase family. In terms of assembly, homodimer.

The enzyme catalyses deamido-NAD(+) + NH4(+) + ATP = AMP + diphosphate + NAD(+) + H(+). It participates in cofactor biosynthesis; NAD(+) biosynthesis; NAD(+) from deamido-NAD(+) (ammonia route): step 1/1. Functionally, catalyzes the ATP-dependent amidation of deamido-NAD to form NAD. Uses ammonia as a nitrogen source. The chain is NH(3)-dependent NAD(+) synthetase from Helicobacter pylori (strain J99 / ATCC 700824) (Campylobacter pylori J99).